Reading from the N-terminus, the 231-residue chain is Large ribosomal subunit protein uL1 (231 aa).

The protein belongs to the universal ribosomal protein uL1 family. As to quaternary structure, part of the 50S ribosomal subunit.

Functionally, binds directly to 23S rRNA. The L1 stalk is quite mobile in the ribosome, and is involved in E site tRNA release. Protein L1 is also a translational repressor protein, it controls the translation of the L11 operon by binding to its mRNA. This chain is Large ribosomal subunit protein uL1, found in Kosmotoga olearia (strain ATCC BAA-1733 / DSM 21960 / TBF 19.5.1).